The chain runs to 166 residues: Regulatory protein RecX (166 aa).

Belongs to the RecX family.

Its subcellular location is the cytoplasm. Modulates RecA activity. In Klebsiella pneumoniae (strain 342), this protein is Regulatory protein RecX.